A 585-amino-acid polypeptide reads, in one-letter code: Arginine--tRNA ligase (585 aa).

Positions Ala-131–His-141 match the 'HIGH' region motif.

Belongs to the class-I aminoacyl-tRNA synthetase family. Monomer.

It localises to the cytoplasm. It catalyses the reaction tRNA(Arg) + L-arginine + ATP = L-arginyl-tRNA(Arg) + AMP + diphosphate. This chain is Arginine--tRNA ligase, found in Allorhizobium ampelinum (strain ATCC BAA-846 / DSM 112012 / S4) (Agrobacterium vitis (strain S4)).